A 431-amino-acid chain; its full sequence is UDP-N-acetylmuramate--L-alanine ligase (431 aa).

108–114 (GSHGKTS) is a binding site for ATP.

Belongs to the MurCDEF family.

It is found in the cytoplasm. It catalyses the reaction UDP-N-acetyl-alpha-D-muramate + L-alanine + ATP = UDP-N-acetyl-alpha-D-muramoyl-L-alanine + ADP + phosphate + H(+). The protein operates within cell wall biogenesis; peptidoglycan biosynthesis. Its function is as follows. Cell wall formation. This is UDP-N-acetylmuramate--L-alanine ligase from Exiguobacterium sibiricum (strain DSM 17290 / CCUG 55495 / CIP 109462 / JCM 13490 / 255-15).